The sequence spans 67 residues: Small ribosomal subunit protein bS21 (67 aa).

The protein belongs to the bacterial ribosomal protein bS21 family.

This Hydrogenobaculum sp. (strain Y04AAS1) protein is Small ribosomal subunit protein bS21.